A 140-amino-acid polypeptide reads, in one-letter code: Phosphopantetheine adenylyltransferase (140 aa).

A substrate-binding site is contributed by S9. Residues 9–10 (SF) and H17 contribute to the ATP site. Positions 41, 74, and 88 each coordinate substrate. ATP contacts are provided by residues 89–91 (GLR), E99, and 124–130 (KRSLSST).

Belongs to the bacterial CoaD family. As to quaternary structure, homohexamer. The cofactor is Mg(2+).

The protein localises to the cytoplasm. The enzyme catalyses (R)-4'-phosphopantetheine + ATP + H(+) = 3'-dephospho-CoA + diphosphate. It participates in cofactor biosynthesis; coenzyme A biosynthesis; CoA from (R)-pantothenate: step 4/5. Its function is as follows. Reversibly transfers an adenylyl group from ATP to 4'-phosphopantetheine, yielding dephospho-CoA (dPCoA) and pyrophosphate. In Mycoplasma capricolum subsp. capricolum (strain California kid / ATCC 27343 / NCTC 10154), this protein is Phosphopantetheine adenylyltransferase.